The chain runs to 141 residues: Protein C19orf12 homolog (141 aa).

Residues 37–57 form a helical membrane-spanning segment; it reads AVAFVGGLVGGPPGLAVGGAV.

This sequence belongs to the C19orf12 family.

The protein localises to the mitochondrion. It is found in the mitochondrion membrane. It localises to the endoplasmic reticulum. The protein resides in the cytoplasm. Its subcellular location is the cytosol. This Bos taurus (Bovine) protein is Protein C19orf12 homolog.